The chain runs to 608 residues: Glutamine--fructose-6-phosphate aminotransferase [isomerizing] (608 aa).

Residue cysteine 2 is the Nucleophile; for GATase activity of the active site. The 216-residue stretch at 2–217 folds into the Glutamine amidotransferase type-2 domain; the sequence is CGIVGIVGHK…DGDWAVVGKT (216 aa). SIS domains follow at residues 283–422 and 456–598; these read TDID…ARGT and LSRE…VDQP. Lysine 603 functions as the For Fru-6P isomerization activity in the catalytic mechanism.

The protein localises to the cytoplasm. The catalysed reaction is D-fructose 6-phosphate + L-glutamine = D-glucosamine 6-phosphate + L-glutamate. Its function is as follows. Involved in the production of the root hair deformation (HAD) factor specifically on medicago. The chain is Glutamine--fructose-6-phosphate aminotransferase [isomerizing] (nodM) from Rhizobium leguminosarum bv. viciae.